Here is a 400-residue protein sequence, read N- to C-terminus: Argininosuccinate synthase (400 aa).

Residues 10–18 and Ala-38 each bind ATP; that span reads AYSGGVDTS. Residue Tyr-89 participates in L-citrulline binding. Gly-119 provides a ligand contact to ATP. L-aspartate is bound by residues Thr-121, Asn-125, and Asp-126. Asn-125 lines the L-citrulline pocket. The L-citrulline site is built by Arg-129, Ser-177, Ser-186, Glu-262, and Tyr-274.

The protein belongs to the argininosuccinate synthase family. Type 1 subfamily. As to quaternary structure, homotetramer.

The protein localises to the cytoplasm. The enzyme catalyses L-citrulline + L-aspartate + ATP = 2-(N(omega)-L-arginino)succinate + AMP + diphosphate + H(+). Its pathway is amino-acid biosynthesis; L-arginine biosynthesis; L-arginine from L-ornithine and carbamoyl phosphate: step 2/3. This is Argininosuccinate synthase from Crocosphaera subtropica (strain ATCC 51142 / BH68) (Cyanothece sp. (strain ATCC 51142)).